The following is a 258-amino-acid chain: Small ribosomal subunit protein mS40 (258 aa).

Residues 1–35 constitute a mitochondrion transit peptide; it reads MAASILNVLLRRLPGVSPFRGAYGVQVLLQTLCTK. Position 49 is a phosphoserine (S49). The interval 223–258 is disordered; sequence RLREESGPPPELMPEVPLTAPAEASSTEPGAPQSAL.

Belongs to the bacterial ribosomal protein bS18 family. Mitochondrion-specific ribosomal protein mS40 subfamily. As to quaternary structure, component of the mitochondrial ribosome small subunit (28S) which comprises a 12S rRNA and about 30 distinct proteins.

It is found in the mitochondrion. The chain is Small ribosomal subunit protein mS40 (MRPS18B) from Sus scrofa (Pig).